Here is a 110-residue protein sequence, read N- to C-terminus: Large ribosomal subunit protein uL24 (110 aa).

The protein belongs to the universal ribosomal protein uL24 family. Part of the 50S ribosomal subunit.

Its function is as follows. One of two assembly initiator proteins, it binds directly to the 5'-end of the 23S rRNA, where it nucleates assembly of the 50S subunit. Functionally, one of the proteins that surrounds the polypeptide exit tunnel on the outside of the subunit. The chain is Large ribosomal subunit protein uL24 from Frankia alni (strain DSM 45986 / CECT 9034 / ACN14a).